The chain runs to 397 residues: Polygalacturonase (397 aa).

The N-terminal stretch at 1–22 is a signal peptide; it reads MGSYLGIYTILVLCLLGYSANA. PbH1 repeat units follow at residues 169–195, 196–217, 219–239, and 249–270; these read GKNMTFDNIKIIAPAESPNTDGIHLGR, CEGVKILNTKIATGDDCISVGD, MKNLLIEKVVCGPGHGISVGS, and VTDITVKNCTLEGTSNGLRIKT. The N-linked (GlcNAc...) asparagine glycan is linked to Asn-171. The active-site Proton donor is Asp-210. A disulfide bond links Cys-212 and Cys-229. His-233 is a catalytic residue. The N-linked (GlcNAc...) asparagine glycan is linked to Asn-256. 2 disulfide bridges follow: Cys-341–Cys-347 and Cys-370–Cys-386.

The protein belongs to the glycosyl hydrolase 28 family. As to expression, pollen.

It is found in the secreted. The protein resides in the cell wall. It catalyses the reaction (1,4-alpha-D-galacturonosyl)n+m + H2O = (1,4-alpha-D-galacturonosyl)n + (1,4-alpha-D-galacturonosyl)m.. May function in depolymerizing pectin during pollen development, germination, and tube growth. This Brassica napus (Rape) protein is Polygalacturonase.